The following is a 492-amino-acid chain: Variant surface glycoprotein MITAT 1.1 (492 aa).

The signal sequence occupies residues 1–32 (MATGRAKNTKWARWLSTAGLIIVVTLPATTMA). Intrachain disulfides connect cysteine 47–cysteine 177 and cysteine 155–cysteine 222. Residues asparagine 298 and asparagine 471 are each glycosylated (N-linked (GlcNAc...) asparagine). Serine 475 is lipidated: GPI-anchor amidated serine. The propeptide at 476–492 (NSFLIHKAPLLLAFLLF) is removed in mature form.

The protein resides in the cell membrane. Its function is as follows. VSG forms a coat on the surface of the parasite. The trypanosome evades the immune response of the host by expressing a series of antigenically distinct VSGs from an estimated 1000 VSG genes. The protein is Variant surface glycoprotein MITAT 1.1 of Trypanosoma brucei brucei.